The primary structure comprises 192 residues: Thymidine kinase (192 aa).

Residues 9–16 (SAMNAGKS) and 87–90 (DECQ) each bind ATP. Residue E88 is the Proton acceptor of the active site. Zn(2+) is bound by residues C145, C147, C182, and H185.

This sequence belongs to the thymidine kinase family. As to quaternary structure, homotetramer.

Its subcellular location is the cytoplasm. The catalysed reaction is thymidine + ATP = dTMP + ADP + H(+). This is Thymidine kinase from Vibrio cholerae serotype O1 (strain ATCC 39315 / El Tor Inaba N16961).